A 173-amino-acid chain; its full sequence is Histone deacetylase complex subunit SAP30 homolog (173 aa).

The segment at 21–69 (CCLLDDGDRCRNQAGNASYSKRIQKTVTQRRLKLSIDTAARHIYICDFH) adopts an Atypical zinc-finger fold.

The protein belongs to the SAP30 family. As to quaternary structure, component of the class 1 Sin3-histone deacetylase complex (HDAC).

It is found in the nucleus. Required for the function of the class 1 Sin3-histone deacetylase complex (HDAC). The sequence is that of Histone deacetylase complex subunit SAP30 homolog from Aedes aegypti (Yellowfever mosquito).